The primary structure comprises 777 residues: E3 UFM1-protein ligase 1 homolog (777 aa).

Residues 396–417 show a composition bias toward basic and acidic residues; that stretch reads MKHQDPMDRDSAVGEGKADKRE. A disordered region spans residues 396–470; sequence MKHQDPMDRD…PSGGKKGGKD (75 aa).

Belongs to the UFL1 family.

Functionally, E3 UFM1-protein ligase that mediates ufmylation of target proteins. The polypeptide is E3 UFM1-protein ligase 1 homolog (Aedes aegypti (Yellowfever mosquito)).